Consider the following 695-residue polypeptide: Elongation factor G (695 aa).

A tr-type G domain is found at 8-282 (EKTRNIGIMA…AVLDYLPAPT (275 aa)). GTP contacts are provided by residues 17-24 (AHIDAGKT), 81-85 (DTPGH), and 135-138 (NKMD).

It belongs to the TRAFAC class translation factor GTPase superfamily. Classic translation factor GTPase family. EF-G/EF-2 subfamily.

The protein resides in the cytoplasm. Its function is as follows. Catalyzes the GTP-dependent ribosomal translocation step during translation elongation. During this step, the ribosome changes from the pre-translocational (PRE) to the post-translocational (POST) state as the newly formed A-site-bound peptidyl-tRNA and P-site-bound deacylated tRNA move to the P and E sites, respectively. Catalyzes the coordinated movement of the two tRNA molecules, the mRNA and conformational changes in the ribosome. The polypeptide is Elongation factor G (Listeria innocua serovar 6a (strain ATCC BAA-680 / CLIP 11262)).